The sequence spans 266 residues: Thymidylate synthase (266 aa).

R24 serves as a coordination point for dUMP. (6R)-5,10-methylene-5,6,7,8-tetrahydrofolate is bound at residue H54. DUMP is bound at residue 129 to 130 (RR). The active-site Nucleophile is C149. Residues 169 to 172 (RSAD), N180, and 210 to 212 (HIY) each bind dUMP. D172 contributes to the (6R)-5,10-methylene-5,6,7,8-tetrahydrofolate binding site. (6R)-5,10-methylene-5,6,7,8-tetrahydrofolate is bound at residue A265.

This sequence belongs to the thymidylate synthase family. Bacterial-type ThyA subfamily. In terms of assembly, homodimer.

The protein localises to the cytoplasm. It catalyses the reaction dUMP + (6R)-5,10-methylene-5,6,7,8-tetrahydrofolate = 7,8-dihydrofolate + dTMP. Its pathway is pyrimidine metabolism; dTTP biosynthesis. Functionally, catalyzes the reductive methylation of 2'-deoxyuridine-5'-monophosphate (dUMP) to 2'-deoxythymidine-5'-monophosphate (dTMP) while utilizing 5,10-methylenetetrahydrofolate (mTHF) as the methyl donor and reductant in the reaction, yielding dihydrofolate (DHF) as a by-product. This enzymatic reaction provides an intracellular de novo source of dTMP, an essential precursor for DNA biosynthesis. This is Thymidylate synthase from Mycobacterium sp. (strain KMS).